Consider the following 513-residue polypeptide: Zinc finger CCCH-type with G patch domain-containing protein (513 aa).

The C3H1-type zinc-finger motif lies at 155 to 178; sequence PCSYYLEGECRFDEAKCRFSHGAL. 2 stretches are compositionally biased toward acidic residues: residues 252–261 and 273–283; these read DQDEDDELSS and SDEAESDMDDL. The tract at residues 252 to 283 is disordered; sequence DQDEDDELSSEESTSSMRDASSDEAESDMDDL. One can recognise a G-patch domain in the interval 312-358; the sequence is TRGIGSKLMEKMGYIHGTGLGSDGRGIVTPVSAQILPQGRSLDACME. Polar residues predominate over residues 477-495; it reads QVQMQSHKQELATLQAQER. The segment at 477–513 is disordered; sequence QVQMQSHKQELATLQAQERSLSKEQQTRKSKNKMFEF. The segment covering 496 to 513 has biased composition (basic and acidic residues); that stretch reads SLSKEQQTRKSKNKMFEF.

The protein resides in the nucleus. Transcription repressor. The chain is Zinc finger CCCH-type with G patch domain-containing protein from Drosophila simulans (Fruit fly).